Reading from the N-terminus, the 362-residue chain is Phosphoserine aminotransferase (362 aa).

R43 is an L-glutamate binding site. Pyridoxal 5'-phosphate is bound by residues 77–78 (AR), W103, T153, D173, and Q196. K197 is subject to N6-(pyridoxal phosphate)lysine.

It belongs to the class-V pyridoxal-phosphate-dependent aminotransferase family. SerC subfamily. As to quaternary structure, homodimer. It depends on pyridoxal 5'-phosphate as a cofactor.

It localises to the cytoplasm. The enzyme catalyses O-phospho-L-serine + 2-oxoglutarate = 3-phosphooxypyruvate + L-glutamate. It carries out the reaction 4-(phosphooxy)-L-threonine + 2-oxoglutarate = (R)-3-hydroxy-2-oxo-4-phosphooxybutanoate + L-glutamate. It participates in amino-acid biosynthesis; L-serine biosynthesis; L-serine from 3-phospho-D-glycerate: step 2/3. It functions in the pathway cofactor biosynthesis; pyridoxine 5'-phosphate biosynthesis; pyridoxine 5'-phosphate from D-erythrose 4-phosphate: step 3/5. Functionally, catalyzes the reversible conversion of 3-phosphohydroxypyruvate to phosphoserine and of 3-hydroxy-2-oxo-4-phosphonooxybutanoate to phosphohydroxythreonine. The sequence is that of Phosphoserine aminotransferase from Legionella pneumophila (strain Corby).